Consider the following 396-residue polypeptide: Phosphoglycerate kinase (396 aa).

Residues 21–23, Arg37, 60–63, Arg121, and Arg154 contribute to the substrate site; these read DFN and HLGR. Residues Lys205, Gly296, Glu327, and 353-356 each bind ATP; that span reads GGDS.

The protein belongs to the phosphoglycerate kinase family. In terms of assembly, monomer.

The protein localises to the cytoplasm. The catalysed reaction is (2R)-3-phosphoglycerate + ATP = (2R)-3-phospho-glyceroyl phosphate + ADP. The protein operates within carbohydrate degradation; glycolysis; pyruvate from D-glyceraldehyde 3-phosphate: step 2/5. This Anaeromyxobacter dehalogenans (strain 2CP-1 / ATCC BAA-258) protein is Phosphoglycerate kinase.